A 451-amino-acid polypeptide reads, in one-letter code: Bifunctional protein GlmU (451 aa).

The interval 1 to 230 (MNNPIAAIVL…PADVGGINSR (230 aa)) is pyrophosphorylase. UDP-N-acetyl-alpha-D-glucosamine is bound by residues 10–13 (LAAG), Lys-24, Gln-74, 79–80 (GT), 102–104 (YGD), Gly-142, Glu-156, Asn-171, and Asn-228. Asp-104 contacts Mg(2+). Asn-228 provides a ligand contact to Mg(2+). Residues 231-251 (AELAAAEAQWQAFRREEAMAA) are linker. Residues 252–451 (GASLRAPETV…RKKKAAEQKK (200 aa)) are N-acetyltransferase. Arg-317 and Lys-335 together coordinate UDP-N-acetyl-alpha-D-glucosamine. His-347 (proton acceptor) is an active-site residue. 2 residues coordinate UDP-N-acetyl-alpha-D-glucosamine: Tyr-350 and Asn-361. Residues Ala-364, 370–371 (NY), Ser-389, Ala-407, and Arg-424 contribute to the acetyl-CoA site.

In the N-terminal section; belongs to the N-acetylglucosamine-1-phosphate uridyltransferase family. It in the C-terminal section; belongs to the transferase hexapeptide repeat family. Homotrimer. Mg(2+) serves as cofactor.

The protein resides in the cytoplasm. The catalysed reaction is alpha-D-glucosamine 1-phosphate + acetyl-CoA = N-acetyl-alpha-D-glucosamine 1-phosphate + CoA + H(+). The enzyme catalyses N-acetyl-alpha-D-glucosamine 1-phosphate + UTP + H(+) = UDP-N-acetyl-alpha-D-glucosamine + diphosphate. The protein operates within nucleotide-sugar biosynthesis; UDP-N-acetyl-alpha-D-glucosamine biosynthesis; N-acetyl-alpha-D-glucosamine 1-phosphate from alpha-D-glucosamine 6-phosphate (route II): step 2/2. Its pathway is nucleotide-sugar biosynthesis; UDP-N-acetyl-alpha-D-glucosamine biosynthesis; UDP-N-acetyl-alpha-D-glucosamine from N-acetyl-alpha-D-glucosamine 1-phosphate: step 1/1. It functions in the pathway bacterial outer membrane biogenesis; LPS lipid A biosynthesis. Functionally, catalyzes the last two sequential reactions in the de novo biosynthetic pathway for UDP-N-acetylglucosamine (UDP-GlcNAc). The C-terminal domain catalyzes the transfer of acetyl group from acetyl coenzyme A to glucosamine-1-phosphate (GlcN-1-P) to produce N-acetylglucosamine-1-phosphate (GlcNAc-1-P), which is converted into UDP-GlcNAc by the transfer of uridine 5-monophosphate (from uridine 5-triphosphate), a reaction catalyzed by the N-terminal domain. The chain is Bifunctional protein GlmU from Sphingopyxis alaskensis (strain DSM 13593 / LMG 18877 / RB2256) (Sphingomonas alaskensis).